The primary structure comprises 364 residues: Long-wave-sensitive opsin 1 (364 aa).

At 1 to 58 (MTQRWGPQRLAGGQPQAGLEESTQASIFTYTNSNATRDPFEGPNYHIAPRWVYHLTSA) the chain is on the extracellular side. A glycan (O-linked (GlcNAc) serine) is linked at S22. An N-linked (GlcNAc...) asparagine glycan is attached at N34. Residues 59-79 (WMIFVVIASVFTNGLVLVATM) form a helical membrane-spanning segment. Residues 80-90 (RFKKLRHPLNW) are Cytoplasmic-facing. A helical transmembrane segment spans residues 91 to 111 (ILVNLAIADLAETIIASTISV). Residues 112 to 126 (VNQIYGYFVLGHPLC) lie on the Extracellular side of the membrane. An intrachain disulfide couples C126 to C203. The chain crosses the membrane as a helical span at residues 127 to 147 (VVEGYTVSLCGITGLWSLAII). Over 148–168 (SWERWLVVCKPFGNVRFDAKL) the chain is Cytoplasmic. A helical membrane pass occupies residues 169-189 (AIAGIAFSWIWAAVWTAPPIF). Over 190–219 (GWSRYWPHGLKTSCGPDVFSGSSYPGVQSY) the chain is Extracellular. Residues 220–240 (MIVLMTTCCIIPLSVIILCYL) form a helical membrane-spanning segment. At 241–269 (QVWLAIRAVAKQQKESESTQKAEKEVTRM) the chain is on the cytoplasmic side. Residues 270–290 (VVVMVLAYCLCWGPYTFFACF) form a helical membrane-spanning segment. Residues 291 to 301 (AAAHPGYAFHP) are Extracellular-facing. Residues 302–324 (LVAALPAYFAKSATIYNPIIYVF) traverse the membrane as a helical segment. The residue at position 312 (K312) is an N6-(retinylidene)lysine. Topologically, residues 325–364 (MNRQFRNCILQLFGKKVDDSSELSSASRTEASSVSSVSPA) are cytoplasmic.

Belongs to the G-protein coupled receptor 1 family. Opsin subfamily. In terms of processing, phosphorylated on some or all of the serine and threonine residues present in the C-terminal region. As to expression, the three color pigments are found in the cone photoreceptor cells.

The protein resides in the membrane. In terms of biological role, visual pigments are the light-absorbing molecules that mediate vision. They consist of an apoprotein, opsin, covalently linked to cis-retinal. This is Long-wave-sensitive opsin 1 (OPN1LW) from Canis lupus familiaris (Dog).